The chain runs to 344 residues: Melanocyte-stimulating hormone receptor (344 aa).

Residues 1-37 are Extracellular-facing; the sequence is MPMQGAQRKLLGSLNSTPTATSNLGLAANHTGAPCLE. A glycan (N-linked (GlcNAc...) asparagine) is linked at Asn-29. Residues 38–63 traverse the membrane as a helical segment; it reads VSIPDGLFLSLGLVSLVENVLVVAAI. Residues 64–72 are Cytoplasmic-facing; the sequence is AKNRNLHSS. A helical membrane pass occupies residues 73–93; it reads MYCFICCLALSDLLVSGSNML. Over 94-118 the chain is Extracellular; it reads ETAIILLLEAGTLATRASVVQQLHN. Residues 119-140 form a helical membrane-spanning segment; sequence TIDVLTCSSMLCSLCFLGAIAV. The Cytoplasmic segment spans residues 141-163; it reads DRYISIFYALRYHSIMTLPRAQR. The helical transmembrane segment at 164 to 183 threads the bilayer; sequence AIAAIWVTSVLSSTLFITYY. Over 184–191 the chain is Extracellular; that stretch reads DHAAVLLC. The chain crosses the membrane as a helical span at residues 192–211; the sequence is LVVFFLAMLVLMAVLYVHML. Residues 212–240 are Cytoplasmic-facing; that stretch reads ARACQHAQGIIRLHNRQLPAHKGFGLRGA. A helical transmembrane segment spans residues 241–266; it reads ATLTILLGIFFLCWGPFFLHLTLVVF. Topologically, residues 267–279 are extracellular; the sequence is CPQHLTCNCIFKN. The chain crosses the membrane as a helical span at residues 280-300; sequence FKVFLTLIICNTIIDPLIYAF. Residues 301-344 are Cytoplasmic-facing; that stretch reads RSQELRRTLKEVLLCSWWPGCGAEGGGDSVWPGSCVTLRGPLPP. Cys-315 carries S-palmitoyl cysteine lipidation.

Belongs to the G-protein coupled receptor 1 family. Interacts with MGRN1, but does not undergo MGRN1-mediated ubiquitination; this interaction competes with GNAS-binding and thus inhibits agonist-induced cAMP production. Interacts with OPN3; the interaction results in a decrease in MC1R-mediated cAMP signaling and ultimately a decrease in melanin production in melanocytes.

The protein resides in the cell membrane. Receptor for MSH (alpha, beta and gamma) and ACTH. The activity of this receptor is mediated by G proteins which activate adenylate cyclase. Mediates melanogenesis, the production of eumelanin (black/brown) and phaeomelanin (red/yellow), via regulation of cAMP signaling in melanocytes. The polypeptide is Melanocyte-stimulating hormone receptor (MC1R) (Mico argentatus (Silvery marmoset)).